A 237-amino-acid chain; its full sequence is tRNA (guanine-N(7)-)-methyltransferase (237 aa).

S-adenosyl-L-methionine contacts are provided by Glu68, Glu93, Asp120, and Asp143. The active site involves Asp143. Residues Lys147, Asp179, and Thr216–Glu219 contribute to the substrate site.

This sequence belongs to the class I-like SAM-binding methyltransferase superfamily. TrmB family.

The catalysed reaction is guanosine(46) in tRNA + S-adenosyl-L-methionine = N(7)-methylguanosine(46) in tRNA + S-adenosyl-L-homocysteine. It participates in tRNA modification; N(7)-methylguanine-tRNA biosynthesis. Its function is as follows. Catalyzes the formation of N(7)-methylguanine at position 46 (m7G46) in tRNA. This is tRNA (guanine-N(7)-)-methyltransferase from Shewanella piezotolerans (strain WP3 / JCM 13877).